The following is a 131-amino-acid chain: Putative pre-16S rRNA nuclease (131 aa).

The protein belongs to the YqgF nuclease family.

It is found in the cytoplasm. Could be a nuclease involved in processing of the 5'-end of pre-16S rRNA. The sequence is that of Putative pre-16S rRNA nuclease from Bordetella petrii (strain ATCC BAA-461 / DSM 12804 / CCUG 43448).